The following is a 126-amino-acid chain: Holo-[acyl-carrier-protein] synthase (126 aa).

Mg(2+) contacts are provided by aspartate 9 and glutamate 58.

Belongs to the P-Pant transferase superfamily. AcpS family. The cofactor is Mg(2+).

Its subcellular location is the cytoplasm. It catalyses the reaction apo-[ACP] + CoA = holo-[ACP] + adenosine 3',5'-bisphosphate + H(+). Transfers the 4'-phosphopantetheine moiety from coenzyme A to a Ser of acyl-carrier-protein. This chain is Holo-[acyl-carrier-protein] synthase, found in Sodalis glossinidius (strain morsitans).